We begin with the raw amino-acid sequence, 373 residues long: Queuine tRNA-ribosyltransferase (373 aa).

The active-site Proton acceptor is D89. Substrate is bound by residues 89–93 (DSGGF), D143, Q185, and G212. Positions 243–249 (GVGRPED) are RNA binding. The Nucleophile role is filled by D262. An RNA binding; important for wobble base 34 recognition region spans residues 267-271 (TRNAR). The Zn(2+) site is built by C300, C302, C305, and H331.

It belongs to the queuine tRNA-ribosyltransferase family. Homodimer. Within each dimer, one monomer is responsible for RNA recognition and catalysis, while the other monomer binds to the replacement base PreQ1. It depends on Zn(2+) as a cofactor.

It carries out the reaction 7-aminomethyl-7-carbaguanine + guanosine(34) in tRNA = 7-aminomethyl-7-carbaguanosine(34) in tRNA + guanine. It participates in tRNA modification; tRNA-queuosine biosynthesis. In terms of biological role, catalyzes the base-exchange of a guanine (G) residue with the queuine precursor 7-aminomethyl-7-deazaguanine (PreQ1) at position 34 (anticodon wobble position) in tRNAs with GU(N) anticodons (tRNA-Asp, -Asn, -His and -Tyr). Catalysis occurs through a double-displacement mechanism. The nucleophile active site attacks the C1' of nucleotide 34 to detach the guanine base from the RNA, forming a covalent enzyme-RNA intermediate. The proton acceptor active site deprotonates the incoming PreQ1, allowing a nucleophilic attack on the C1' of the ribose to form the product. After dissociation, two additional enzymatic reactions on the tRNA convert PreQ1 to queuine (Q), resulting in the hypermodified nucleoside queuosine (7-(((4,5-cis-dihydroxy-2-cyclopenten-1-yl)amino)methyl)-7-deazaguanosine). The sequence is that of Queuine tRNA-ribosyltransferase from Marinobacter nauticus (strain ATCC 700491 / DSM 11845 / VT8) (Marinobacter aquaeolei).